Reading from the N-terminus, the 1003-residue chain is Cytosolic carboxypeptidase 3 (1003 aa).

The tract at residues 1–23 (MSEDSEKEDYSDRTISDEDESDE) is disordered. Residues 299–570 (YPYTYTNLQE…HFCDSLLDYC (272 aa)) enclose the Peptidase M14 domain. His-364, Glu-367, and His-460 together coordinate Zn(2+). Residue Glu-534 is the Proton donor/acceptor of the active site. Disordered stretches follow at residues 642–662 (KQLKTKKERNSTIERHQNIRE) and 911–1003 (KSSE…QRDT). The segment covering 649-662 (ERNSTIERHQNIRE) has biased composition (basic and acidic residues). Residues 922-934 (PKKRRKYSRVKAT) show a composition bias toward basic residues. Over residues 963–976 (AEGSSQQGTMQTAP) the composition is skewed to polar residues.

It belongs to the peptidase M14 family. Zn(2+) is required as a cofactor.

It localises to the cytoplasm. It is found in the cytosol. It catalyses the reaction (L-glutamyl)(n+1)-gamma-L-glutamyl-L-glutamyl-[protein] + H2O = (L-glutamyl)(n)-gamma-L-glutamyl-L-glutamyl-[protein] + L-glutamate. In terms of biological role, metallocarboxypeptidase that mediates deglutamylation of tubulin and non-tubulin target proteins. Catalyzes the removal of polyglutamate side chains present on the gamma-carboxyl group of glutamate residues within the C-terminal tail of tubulin protein. Specifically cleaves tubulin long-side-chains, while it is not able to remove the branching point glutamate. Also catalyzes the removal of polyglutamate residues from the carboxy-terminus of non-tubulin proteins such as MYLK. May catalyze the hydrolysis of aspartate from the carboxy-terminus of target proteins. Does not show detyrosinase or deglycylase activities from the carboxy-terminus of target proteins. The chain is Cytosolic carboxypeptidase 3 (AGBL3) from Bos taurus (Bovine).